Reading from the N-terminus, the 345-residue chain is Serpentine receptor class beta-13 (345 aa).

The Extracellular portion of the chain corresponds to 1–22 (MAGINQTKCDLGFQITFNTVYR). An N-linked (GlcNAc...) asparagine glycan is attached at N5. Residues 23-43 (FSQFYTFSVSSFAVPGLIYFM) traverse the membrane as a helical segment. Residues 44–58 (FKRLFQLYFHGNLKT) are Cytoplasmic-facing. A helical transmembrane segment spans residues 59 to 79 (LLIAYFISILLYAVMLCFAFG). Topologically, residues 80-103 (YQFFVPFFIKSNCDLIINKTLFKY) are extracellular. N97 carries N-linked (GlcNAc...) asparagine glycosylation. Residues 104-124 (IHTSVIFLLTTPMMFPLGFSI) traverse the membrane as a helical segment. The Cytoplasmic segment spans residues 125 to 142 (ERFTAMAMASRYENIRTL). The helical transmembrane segment at 143 to 163 (IGPVLVIFLIIPNCIIFYFLF) threads the bilayer. Topologically, residues 164–189 (QHETYDDTFISFLMLPNTTAVNFNTY) are extracellular. N180 carries N-linked (GlcNAc...) asparagine glycosylation. The helical transmembrane segment at 190 to 210 (LWFLLYLNIGNLALNVLLLLV) threads the bilayer. Over 211 to 241 (HRKFKRRLLLHKTSLSTRYAIEEISQSSKFT) the chain is Cytoplasmic. A helical transmembrane segment spans residues 242–262 (LIITFTHLLFFGCNTICSILV). Residues 263–280 (RVLGEPFFGSFINHSVAR) are Extracellular-facing. N275 carries an N-linked (GlcNAc...) asparagine glycan. The helical transmembrane segment at 281-301 (GVNCAVPTYNLVIVVVGFVSL) threads the bilayer. Residues 302-345 (SKLNSRRQQEVQTTVQLKTTGKEGARNYDNITANQWATITQIGF) lie on the Cytoplasmic side of the membrane.

It belongs to the nematode receptor-like protein srb family. As to expression, expressed in the head sensory neurons ASI, ASK and AWB. Not expressed in male somatic gonads or sperm.

It localises to the cell membrane. Its subcellular location is the perikaryon. The protein resides in the cell projection. The protein localises to the dendrite. In terms of biological role, G-protein coupled receptor that antagonizes the negative effects of the gcy-35 oxygen sensor on spermatogenesis. This leads to the maintenance of mitochondrial function in developing spermatocytes and/or spermatids prior to testis maturation during the early larval stages. Regulates the navigational capacity of sperm during hyperoxic conditions ensuring the proper targeting of sperm derived from males to the fertilization site in the uterus of hermaphrodites. May act in the same signaling pathway as the neuropeptide flp-21. This chain is Serpentine receptor class beta-13, found in Caenorhabditis elegans.